The sequence spans 325 residues: MDARRKHWKENMFTPFFSAQDVLEETSEPESSSEQTTADSSKGMEEIYNLSSRKFQEESKFKRKKYIFQLNEIEQEQNLRENKRNISKNETDTNSASYESSNVDVTTEESFNSTEDNSTCSTDNLPALLRQDIRKKFMERMSPKLCLNLLNEELEELNMKYRKIEEEFENAEKELLHYKKEIFTKPLNFQETETDASKSDYELQALRNDLSEKATNVKNLSEQLQQAKEVIHKLNLENRNLKEAVRKLKHQTEVGNVLLKEEMKSYYELEMAKIRGELSVIKNELRTEKTLQARNNRALELLRKYYASSMVTSSSILDHFTGDFF.

Disordered regions lie at residues serine 18–glutamate 45 and glutamate 81–aspartate 123. Residues glutamate 81–threonine 91 show a composition bias toward basic and acidic residues. Residues aspartate 92 to aspartate 123 are compositionally biased toward polar residues. Residues lysine 144 to glutamate 288 are a coiled coil.

Belongs to the CCDC160 family.

This chain is Coiled-coil domain-containing protein 160 (CCDC160), found in Homo sapiens (Human).